The sequence spans 139 residues: von Hippel-Lindau-like protein (139 aa).

A disordered region spans residues 1 to 22; the sequence is MPWRAGNGVGLEAQAGTQEAGP. The segment at 54 to 135 is beta-domain; the sequence is SRIIICNHSP…GQPVFANITL (82 aa).

It belongs to the VHL family. Interacts via the beta domain with the ODD domain of HIF1A. This interaction is independent of prolyl hydroxylation of HIF1A. In terms of tissue distribution, abundantly expressed in the placenta.

Functions as a dominant-negative VHL to serve as a protector of HIFalpha. The sequence is that of von Hippel-Lindau-like protein (VHLL) from Homo sapiens (Human).